Reading from the N-terminus, the 633-residue chain is Phosphomethylpyrimidine synthase (633 aa).

Substrate-binding positions include N245, M274, Y303, H339, 359–361 (SRG), 400–403 (DGLR), and E439. H443 contributes to the Zn(2+) binding site. Y466 is a substrate binding site. Zn(2+) is bound at residue H507. Residues C587, C590, and C595 each coordinate [4Fe-4S] cluster.

Belongs to the ThiC family. In terms of assembly, homodimer. Requires [4Fe-4S] cluster as cofactor.

The catalysed reaction is 5-amino-1-(5-phospho-beta-D-ribosyl)imidazole + S-adenosyl-L-methionine = 4-amino-2-methyl-5-(phosphooxymethyl)pyrimidine + CO + 5'-deoxyadenosine + formate + L-methionine + 3 H(+). It participates in cofactor biosynthesis; thiamine diphosphate biosynthesis. Its function is as follows. Catalyzes the synthesis of the hydroxymethylpyrimidine phosphate (HMP-P) moiety of thiamine from aminoimidazole ribotide (AIR) in a radical S-adenosyl-L-methionine (SAM)-dependent reaction. The polypeptide is Phosphomethylpyrimidine synthase (Neisseria meningitidis serogroup C (strain 053442)).